A 476-amino-acid chain; its full sequence is Cytosolic iron-sulfur assembly component 3 (476 aa).

Ala-2 is subject to N-acetylalanine. Residues Cys-24, Cys-71, Cys-74, Cys-77, Cys-190, Cys-246, Cys-395, and Cys-399 each contribute to the [4Fe-4S] cluster site.

This sequence belongs to the NARF family. In terms of assembly, external component of the CIA complex. In the CIA complex, interacts directly with CIAO1 and MMS19.

Functionally, component of the cytosolic iron-sulfur protein assembly (CIA) complex, a multiprotein complex that mediates the incorporation of iron-sulfur cluster into extramitochondrial Fe/S proteins. Seems to negatively regulate the level of HIF1A expression, although this effect could be indirect. The polypeptide is Cytosolic iron-sulfur assembly component 3 (Bos taurus (Bovine)).